The primary structure comprises 207 residues: MTEKLKNSKEVIAYIAECFPKCFTLEGEAKPLKIGIFQDLAERLSEDEKVSKTQLRAALRQYTSSWRYLHGVKLGATRVDLDGNECGVLEEEHVEHAKATLAESKAKVQARRKEQAQKARDEEKSKPKTKKAPQQRRANKPQAQKPAKQPVETRALNADELITGKAVNVNMGKGNMAATIVEINKDDVRVQLSNGLQMVVKAEHLRA.

Residues 100–156 (TLAESKAKVQARRKEQAQKARDEEKSKPKTKKAPQQRRANKPQAQKPAKQPVETRAL) are disordered. Basic and acidic residues predominate over residues 111–126 (RRKEQAQKARDEEKSK). Basic residues predominate over residues 127–139 (PKTKKAPQQRRAN).

Belongs to the ProQ family.

It is found in the cytoplasm. Its function is as follows. RNA chaperone with significant RNA binding, RNA strand exchange and RNA duplexing activities. The polypeptide is RNA chaperone ProQ (Vibrio vulnificus (strain CMCP6)).